A 1058-amino-acid chain; its full sequence is Carbamoyl phosphate synthase large chain (1058 aa).

The segment at 1–401 is carboxyphosphate synthetic domain; sequence MPKRTDIQKI…SLLKACRSLE (401 aa). The ATP site is built by Arg129, Arg169, Gly175, Gly176, Arg208, Ile210, Glu215, Gly241, Ile242, His243, Gln284, and Glu298. Positions 133–327 constitute an ATP-grasp 1 domain; it reads KQLMEELEQP…IAKLAAKIAV (195 aa). Residues Gln284, Glu298, and Asn300 each coordinate Mg(2+). Gln284, Glu298, and Asn300 together coordinate Mn(2+). The oligomerization domain stretch occupies residues 402–546; it reads IGVHHNEIPE…YSTYGWENES (145 aa). The carbamoyl phosphate synthetic domain stretch occupies residues 547-929; it reads IRSDKESVLV…ALYKAFEASY (383 aa). In terms of domain architecture, ATP-grasp 2 spans 671-861; the sequence is EQALKELDIP…MAQVATKLIL (191 aa). 10 residues coordinate ATP: Arg707, Ser746, Ile748, Glu752, Gly777, Val778, His779, Ser780, Gln820, and Glu832. Mg(2+)-binding residues include Gln820, Glu832, and Asn834. 3 residues coordinate Mn(2+): Gln820, Glu832, and Asn834. The MGS-like domain maps to 930-1058; it reads LHLPTFGNVV…ESRSFVTEAI (129 aa). Residues 930 to 1058 are allosteric domain; sequence LHLPTFGNVV…ESRSFVTEAI (129 aa).

This sequence belongs to the CarB family. As to quaternary structure, composed of two chains; the small (or glutamine) chain promotes the hydrolysis of glutamine to ammonia, which is used by the large (or ammonia) chain to synthesize carbamoyl phosphate. Tetramer of heterodimers (alpha,beta)4. Mg(2+) is required as a cofactor. Mn(2+) serves as cofactor.

The enzyme catalyses hydrogencarbonate + L-glutamine + 2 ATP + H2O = carbamoyl phosphate + L-glutamate + 2 ADP + phosphate + 2 H(+). The catalysed reaction is hydrogencarbonate + NH4(+) + 2 ATP = carbamoyl phosphate + 2 ADP + phosphate + 2 H(+). It participates in amino-acid biosynthesis; L-arginine biosynthesis; carbamoyl phosphate from bicarbonate: step 1/1. The protein operates within pyrimidine metabolism; UMP biosynthesis via de novo pathway; (S)-dihydroorotate from bicarbonate: step 1/3. Its function is as follows. Large subunit of the glutamine-dependent carbamoyl phosphate synthetase (CPSase). CPSase catalyzes the formation of carbamoyl phosphate from the ammonia moiety of glutamine, carbonate, and phosphate donated by ATP, constituting the first step of 2 biosynthetic pathways, one leading to arginine and/or urea and the other to pyrimidine nucleotides. The large subunit (synthetase) binds the substrates ammonia (free or transferred from glutamine from the small subunit), hydrogencarbonate and ATP and carries out an ATP-coupled ligase reaction, activating hydrogencarbonate by forming carboxy phosphate which reacts with ammonia to form carbamoyl phosphate. The protein is Carbamoyl phosphate synthase large chain of Streptococcus pneumoniae (strain ATCC BAA-255 / R6).